The following is a 460-amino-acid chain: Biphenyl 2,3-dioxygenase subunit alpha (460 aa).

A Rieske domain is found at 56 to 165; the sequence is WLLMGHETQI…VETYKGLIFA (110 aa). Positions 98, 100, 118, and 121 each coordinate [2Fe-2S] cluster. Residue 217–230 coordinates substrate; sequence QFCSDMYHAGTTSH. Residues His224, His230, and Asp378 each contribute to the Fe cation site.

Belongs to the bacterial ring-hydroxylating dioxygenase alpha subunit family. In terms of assembly, heterohexamer consisting of three BphA1 subunits and three BphA2 subunits. The multicomponent biphenyl dioxygenase system is composed of a ferredoxin reductase (BphA4), a ferredoxin (BphA3), and a terminal oxygenase (BphA1A2). It depends on [2Fe-2S] cluster as a cofactor. The cofactor is Fe cation.

The enzyme catalyses biphenyl + NADH + O2 + H(+) = (2R,3S)-3-phenylcyclohexa-3,5-diene-1,2-diol + NAD(+). The protein operates within xenobiotic degradation; biphenyl degradation; 2-hydroxy-2,4-pentadienoate and benzoate from biphenyl: step 1/4. In terms of biological role, part of the oxygenase component of the biphenyl dioxygenase system that catalyzes the stereospecific dihydroxylation of the aromatic ring of biphenyl, yielding a dihydrodiol compound. Is essential for biphenyl degradation and growth of Rhodococcus sp. strain RHA1 on biphenyl as the sole source of carbon and energy. Can also use naphtalene and 4-chlorobiphenyl (4-CB) as substrates, as well as some polychlorinated biphenyls (PCB) such as 2,2'-dichlorobiphenyl, 2,3-dichlorobiphenyl and 2,5,2'-trichlorobiphenyl. Exhibits weak activity toward dibenzofuran and dibenzo-p-dioxin. Electrons are transferred from NADH to the [2Fe-2S] cluster in BphA1 via FAD of BphA4 and [2Fe-2S] cluster of BphA3. This Rhodococcus jostii (strain RHA1) protein is Biphenyl 2,3-dioxygenase subunit alpha.